A 244-amino-acid polypeptide reads, in one-letter code: tRNA pseudouridine synthase A (244 aa).

Catalysis depends on Asp52, which acts as the Nucleophile. Position 111 (Tyr111) interacts with substrate.

Belongs to the tRNA pseudouridine synthase TruA family. In terms of assembly, homodimer.

The catalysed reaction is uridine(38/39/40) in tRNA = pseudouridine(38/39/40) in tRNA. In terms of biological role, formation of pseudouridine at positions 38, 39 and 40 in the anticodon stem and loop of transfer RNAs. This Thermosipho melanesiensis (strain DSM 12029 / CIP 104789 / BI429) protein is tRNA pseudouridine synthase A.